The primary structure comprises 225 residues: Insulin-induced gene 2 protein (225 aa).

The Cytoplasmic segment spans residues Met1–Leu28. Residues Met29–Ile51 traverse the membrane as a helical segment. Residues Gln52–Ala70 are Lumenal-facing. The chain crosses the membrane as a helical span at residues Trp71–Tyr88. Residues Pro89–Arg103 lie on the Cytoplasmic side of the membrane. A helical membrane pass occupies residues Glu104–Asp126. The Lumenal portion of the chain corresponds to Phe127–Asn129. The chain crosses the membrane as a helical span at residues Asn130–Phe148. Over Asp149–Ser153 the chain is Cytoplasmic. Phosphoserine is present on Ser151. Residues Gly154 to Asn175 form a helical membrane-spanning segment. Residues Gly176 to Arg189 lie on the Lumenal side of the membrane. Residues Ser190–Gly207 form a helical membrane-spanning segment. The Cytoplasmic portion of the chain corresponds to Arg208 to Glu225. Cys215 carries the cysteine sulfenic acid (-SOH); alternate modification. Residue Cys215 forms a Glycyl cysteine thioester (Cys-Gly) (interchain with G-Cter in ubiquitin); alternate linkage. Positions Ala219–Glu225 match the KxHxx motif.

This sequence belongs to the INSIG family. As to quaternary structure, interacts with SCAP; interaction is direct and only takes place in the presence of sterols; it prevents interaction between SCAP and the coat protein complex II (COPII). Associates with the SCAP-SREBP complex (composed of SCAP and SREBF1/SREBP1 or SREBF2/SREBP2); association is mediated via its interaction with SCAP and only takes place in the presence of sterols. Interacts with RNF139. Interacts with RNF145. In terms of processing, phosphorylation at Ser-151 by PCK1 reduces binding to oxysterol, disrupting the interaction between INSIG2 and SCAP, thereby promoting nuclear translocation of SREBP proteins (SREBF1/SREBP1 or SREBF2/SREBP2) and subsequent transcription of downstream lipogenesis-related genes. Polyubiquitinated by AMFR/gp78 at Cys-215 in some tissues such as adipose tissues, undifferentiated myoblasts and liver, leading to its degradation. In differentiated myotubes, Cys-215 oxidation prevents ubiquitination at the same site, resulting in protein stabilization. Post-translationally, oxidized at Cys-215 in differentiated myotubes, preventing ubiquitination at the same site, and resulting in protein stabilization.

The protein resides in the endoplasmic reticulum membrane. Oxysterol-binding protein that mediates feedback control of cholesterol synthesis by controlling both endoplasmic reticulum to Golgi transport of SCAP and degradation of HMGCR. Acts as a negative regulator of cholesterol biosynthesis by mediating the retention of the SCAP-SREBP complex in the endoplasmic reticulum, thereby blocking the processing of sterol regulatory element-binding proteins (SREBPs) SREBF1/SREBP1 and SREBF2/SREBP2. Binds oxysterol, including 22-hydroxycholesterol, 24-hydroxycholesterol, 25-hydroxycholesterol and 27-hydroxycholesterol, regulating interaction with SCAP and retention of the SCAP-SREBP complex in the endoplasmic reticulum. In presence of oxysterol, interacts with SCAP, retaining the SCAP-SREBP complex in the endoplasmic reticulum, thereby preventing SCAP from escorting SREBF1/SREBP1 and SREBF2/SREBP2 to the Golgi. Sterol deprivation or phosphorylation by PCK1 reduce oxysterol-binding, disrupting the interaction between INSIG2 and SCAP, thereby promoting Golgi transport of the SCAP-SREBP complex, followed by processing and nuclear translocation of SREBF1/SREBP1 and SREBF2/SREBP2. Also regulates cholesterol synthesis by regulating degradation of HMGCR: initiates the sterol-mediated ubiquitin-mediated endoplasmic reticulum-associated degradation (ERAD) of HMGCR via recruitment of the reductase to the ubiquitin ligase RNF139. The polypeptide is Insulin-induced gene 2 protein (Sus scrofa (Pig)).